The following is a 597-amino-acid chain: DDB1- and CUL4-associated factor 8 (597 aa).

The segment covering Met-1–Glu-24 has biased composition (polar residues). Positions Met-1 to Leu-147 are disordered. Phosphoserine is present on residues Ser-21 and Ser-22. Positions Ile-39–Leu-50 match the Nuclear export signal motif. A compositionally biased stretch (basic and acidic residues) spans Arg-65 to Ser-99. Position 99 is a phosphoserine (Ser-99). Positions Glu-100–Glu-112 are enriched in acidic residues. Positions Pro-114–Arg-122 match the Nuclear localization signal motif. Over residues Asn-124–Glu-137 the composition is skewed to basic and acidic residues. 2 positions are modified to phosphoserine: Ser-129 and Ser-130. 7 WD repeats span residues Gly-191–Asp-230, Gly-234–Asn-275, Gln-281–Lys-321, Glu-329–Asn-369, Glu-385–Tyr-424, Arg-432–Phe-472, and Asp-476–Leu-515. Arg-204 carries the omega-N-methylarginine; by PRMT1 modification. The interval His-558–Ser-597 is disordered.

This sequence belongs to the WD repeat DCAF8 family. In terms of assembly, interacts with DDB1, CUL4A and CUL4B. Interacts with KPNA1, KPNB1 and XPO1.

The protein resides in the nucleus. It localises to the cytoplasm. Its pathway is protein modification; protein ubiquitination. Functionally, may function as a substrate receptor for CUL4-DDB1 E3 ubiquitin-protein ligase complex. This chain is DDB1- and CUL4-associated factor 8 (DCAF8), found in Homo sapiens (Human).